The chain runs to 939 residues: Isoleucine--tRNA ligase (939 aa).

Residues 57–67 (PYANGHIHLGH) carry the 'HIGH' region motif. An L-isoleucyl-5'-AMP-binding site is contributed by E561. Residues 602 to 606 (KMSKS) carry the 'KMSKS' region motif. An ATP-binding site is contributed by K605. C903, C906, C923, and C926 together coordinate Zn(2+).

This sequence belongs to the class-I aminoacyl-tRNA synthetase family. IleS type 1 subfamily. As to quaternary structure, monomer. Requires Zn(2+) as cofactor.

The protein localises to the cytoplasm. It catalyses the reaction tRNA(Ile) + L-isoleucine + ATP = L-isoleucyl-tRNA(Ile) + AMP + diphosphate. In terms of biological role, catalyzes the attachment of isoleucine to tRNA(Ile). As IleRS can inadvertently accommodate and process structurally similar amino acids such as valine, to avoid such errors it has two additional distinct tRNA(Ile)-dependent editing activities. One activity is designated as 'pretransfer' editing and involves the hydrolysis of activated Val-AMP. The other activity is designated 'posttransfer' editing and involves deacylation of mischarged Val-tRNA(Ile). The polypeptide is Isoleucine--tRNA ligase (Desulfotalea psychrophila (strain LSv54 / DSM 12343)).